A 208-amino-acid chain; its full sequence is Single-stranded DNA-binding protein DdrA (208 aa).

This sequence belongs to the RAD52 family. Homooligomer composed of 8 to 10 subunits; probably arranged in a ring-structure.

In terms of biological role, ssDNA-binding protein that contributes to the ionizing radiation resistance of D.radiodurans. Plays a role in DNA repair and genome reconstitution, in a RecA-independent process, since DdrA is essential for recovery from severe genomic fragmentation as a result of exposure to severe levels of ionizing radiation in an environment lacking nutrients. In vitro, binds to the 3'-ends of single-stranded DNA, protecting them from nuclease degradation. Thus, DdrA is part of a DNA end-protection system that helps to preserve genome integrity following irradiation or desiccation. Does not display DNA strand annealing activity, unlike eukaryotic Rad52 protein homologs. The chain is Single-stranded DNA-binding protein DdrA (ddrA) from Deinococcus radiodurans (strain ATCC 13939 / DSM 20539 / JCM 16871 / CCUG 27074 / LMG 4051 / NBRC 15346 / NCIMB 9279 / VKM B-1422 / R1).